A 290-amino-acid chain; its full sequence is Eukaryotic translation initiation factor 3 subunit G (290 aa).

Positions 1–12 (MADSKQSNRDWA) are enriched in basic and acidic residues. Disordered regions lie at residues 1–30 (MADSKQSNRDWAADDVDADELPPTTESTDA) and 173–192 (AGETGGKYVPPSQRAGATGA). Residues 204 to 285 (PTLRVTSLSI…LILEVAWSQP (82 aa)) enclose the RRM domain.

The protein belongs to the eIF-3 subunit G family. As to quaternary structure, component of the eukaryotic translation initiation factor 3 (eIF-3) complex.

It localises to the cytoplasm. In terms of biological role, RNA-binding component of the eukaryotic translation initiation factor 3 (eIF-3) complex, which is involved in protein synthesis of a specialized repertoire of mRNAs and, together with other initiation factors, stimulates binding of mRNA and methionyl-tRNAi to the 40S ribosome. The eIF-3 complex specifically targets and initiates translation of a subset of mRNAs involved in cell proliferation. This subunit can bind 18S rRNA. The chain is Eukaryotic translation initiation factor 3 subunit G from Cryptococcus neoformans var. neoformans serotype D (strain B-3501A) (Filobasidiella neoformans).